The sequence spans 396 residues: Subtilisin-like protease 5 (396 aa).

The first 20 residues, methionine 1–alanine 20, serve as a signal peptide directing secretion. The propeptide occupies alanine 21–histidine 116. The 77-residue stretch at tyrosine 37 to isoleucine 113 folds into the Inhibitor I9 domain. Residues proline 125 to arginine 396 form the Peptidase S8 domain. Active-site charge relay system residues include aspartate 156 and histidine 187. Asparagine 230 and asparagine 248 each carry an N-linked (GlcNAc...) asparagine glycan. The active-site Charge relay system is serine 342. Positions proline 376–leucine 389 are enriched in polar residues. Residues proline 376–arginine 396 are disordered. Asparagine 392 carries N-linked (GlcNAc...) asparagine glycosylation.

Belongs to the peptidase S8 family.

The protein localises to the secreted. Its function is as follows. Secreted subtilisin-like serine protease with keratinolytic activity that contributes to pathogenicity. This Arthroderma benhamiae (strain ATCC MYA-4681 / CBS 112371) (Trichophyton mentagrophytes) protein is Subtilisin-like protease 5 (SUB5).